The sequence spans 238 residues: Ribonuclease PH (238 aa).

Residues arginine 86 and 124–126 contribute to the phosphate site; that span reads GTR.

This sequence belongs to the RNase PH family. In terms of assembly, homohexameric ring arranged as a trimer of dimers.

It catalyses the reaction tRNA(n+1) + phosphate = tRNA(n) + a ribonucleoside 5'-diphosphate. In terms of biological role, phosphorolytic 3'-5' exoribonuclease that plays an important role in tRNA 3'-end maturation. Removes nucleotide residues following the 3'-CCA terminus of tRNAs; can also add nucleotides to the ends of RNA molecules by using nucleoside diphosphates as substrates, but this may not be physiologically important. Probably plays a role in initiation of 16S rRNA degradation (leading to ribosome degradation) during starvation. The sequence is that of Ribonuclease PH from Marinobacter nauticus (strain ATCC 700491 / DSM 11845 / VT8) (Marinobacter aquaeolei).